A 311-amino-acid polypeptide reads, in one-letter code: Malate dehydrogenase (311 aa).

Residues 7 to 13 and aspartate 34 contribute to the NAD(+) site; that span reads GAAGGIG. Substrate is bound by residues arginine 81 and arginine 87. NAD(+) is bound by residues asparagine 94 and 117 to 119; that span reads ITN. Residues asparagine 119 and arginine 153 each coordinate substrate. The Proton acceptor role is filled by histidine 177. Methionine 227 contributes to the NAD(+) binding site.

The protein belongs to the LDH/MDH superfamily. MDH type 1 family. In terms of assembly, homodimer.

It catalyses the reaction (S)-malate + NAD(+) = oxaloacetate + NADH + H(+). Catalyzes the reversible oxidation of malate to oxaloacetate. The protein is Malate dehydrogenase of Shewanella sediminis (strain HAW-EB3).